The primary structure comprises 170 residues: J domain-containing protein (170 aa).

One can recognise a J domain in the interval 17–82 (DYYALLGCDE…SKRALYDKWR (66 aa)). The disordered stretch occupies residues 101-170 (QQSMHWSKPN…VISKFRNYEI (70 aa)). Positions 110 to 120 (NTKDRMLEGEP) are enriched in basic and acidic residues. Composition is skewed to low complexity over residues 121–135 (GKPS…SNPG) and 142–153 (GGAALWGRWGAG).

The sequence is that of J domain-containing protein (jdp) from Manduca sexta (Tobacco hawkmoth).